Reading from the N-terminus, the 236-residue chain is Small ribosomal subunit protein uS3 (236 aa).

In terms of domain architecture, KH type-2 spans isoleucine 39–arginine 107. The segment at alanine 214 to alanine 236 is disordered.

It belongs to the universal ribosomal protein uS3 family. Part of the 30S ribosomal subunit. Forms a tight complex with proteins S10 and S14.

Its function is as follows. Binds the lower part of the 30S subunit head. Binds mRNA in the 70S ribosome, positioning it for translation. The protein is Small ribosomal subunit protein uS3 of Brucella melitensis biotype 1 (strain ATCC 23456 / CCUG 17765 / NCTC 10094 / 16M).